We begin with the raw amino-acid sequence, 133 residues long: Norrin (133 aa).

A signal peptide spans 1-24; that stretch reads MRKHVLAASFSMLSLLVIMGDTDS. 4 disulfide bridges follow: C39-C96, C55-C110, C65-C126, and C69-C128. Positions 39 to 132 constitute a CTCK domain; it reads CMRHHYVDSI…ILSCHCEECN (94 aa).

In terms of assembly, homodimer; disulfide-linked. Component of a complex, at least composed of TSPAN12, FZD4, LRP5/6 and norrin (NDP). Binds FZD4 with high affinity. Interacts with LRP6 (via Beta-propellers 1 and 2). As to expression, expressed in the outer nuclear, inner nuclear and ganglion cell layers of the retina, and in fetal and adult brain.

The protein localises to the secreted. In terms of biological role, activates the canonical Wnt signaling pathway through FZD4 and LRP5 coreceptor. Plays a central role in retinal vascularization by acting as a ligand for FZD4 that signals via stabilizing beta-catenin (CTNNB1) and activating LEF/TCF-mediated transcriptional programs. Acts in concert with TSPAN12 to activate FZD4 independently of the Wnt-dependent activation of FZD4, suggesting the existence of a Wnt-independent signaling that also promote accumulation the beta-catenin (CTNNB1). May be involved in a pathway that regulates neural cell differentiation and proliferation. Possible role in neuroectodermal cell-cell interaction. This chain is Norrin (NDP), found in Homo sapiens (Human).